Here is a 351-residue protein sequence, read N- to C-terminus: MTQAWWRDACQPLDNAAMDQARARQQQLTKPAGSLGQLEALAIQLAGLQGLERPTLDQVAITIFAGDHGVVEEGISAYPQAVTGQMLCNFVGGGAAISVLARQLQASLDVVDLGTIDAQLELPGVRHLRLGTGTANFARQPAMTENQLQAALQAGRDSAQRGAEQGAQLFIGGEMGIGNTTAAAALASVLLGCPASELSGPGTGLDNAGVQHKAEVIERALRLHGLRAEDPLQVLGCVGGFEIAALVGAYIGCAQAGVAVLVDGFICSVAALVAVRLNPQCRAWLLFAHQGAEPGHKTLLAALQAEPLLALGLRLGEGSGAALAVPLLRLACALHGQMATFAEAAVADRPA.

Residue Glu317 is the Proton acceptor of the active site.

This sequence belongs to the CobT family.

The enzyme catalyses 5,6-dimethylbenzimidazole + nicotinate beta-D-ribonucleotide = alpha-ribazole 5'-phosphate + nicotinate + H(+). It participates in nucleoside biosynthesis; alpha-ribazole biosynthesis; alpha-ribazole from 5,6-dimethylbenzimidazole: step 1/2. Its function is as follows. Catalyzes the synthesis of alpha-ribazole-5'-phosphate from nicotinate mononucleotide (NAMN) and 5,6-dimethylbenzimidazole (DMB). The protein is Nicotinate-nucleotide--dimethylbenzimidazole phosphoribosyltransferase of Pseudomonas putida (strain ATCC 700007 / DSM 6899 / JCM 31910 / BCRC 17059 / LMG 24140 / F1).